Consider the following 224-residue polypeptide: Phosphoribosylformylglycinamidine synthase subunit PurQ (224 aa).

Residues 3 to 224 (FGVVVFPGSN…GLLEKVVALA (222 aa)) enclose the Glutamine amidotransferase type-1 domain. C86 serves as the catalytic Nucleophile. Catalysis depends on residues H195 and E197.

In terms of assembly, part of the FGAM synthase complex composed of 1 PurL, 1 PurQ and 2 PurS subunits.

It localises to the cytoplasm. It carries out the reaction N(2)-formyl-N(1)-(5-phospho-beta-D-ribosyl)glycinamide + L-glutamine + ATP + H2O = 2-formamido-N(1)-(5-O-phospho-beta-D-ribosyl)acetamidine + L-glutamate + ADP + phosphate + H(+). The enzyme catalyses L-glutamine + H2O = L-glutamate + NH4(+). It functions in the pathway purine metabolism; IMP biosynthesis via de novo pathway; 5-amino-1-(5-phospho-D-ribosyl)imidazole from N(2)-formyl-N(1)-(5-phospho-D-ribosyl)glycinamide: step 1/2. In terms of biological role, part of the phosphoribosylformylglycinamidine synthase complex involved in the purines biosynthetic pathway. Catalyzes the ATP-dependent conversion of formylglycinamide ribonucleotide (FGAR) and glutamine to yield formylglycinamidine ribonucleotide (FGAM) and glutamate. The FGAM synthase complex is composed of three subunits. PurQ produces an ammonia molecule by converting glutamine to glutamate. PurL transfers the ammonia molecule to FGAR to form FGAM in an ATP-dependent manner. PurS interacts with PurQ and PurL and is thought to assist in the transfer of the ammonia molecule from PurQ to PurL. The chain is Phosphoribosylformylglycinamidine synthase subunit PurQ from Trichormus variabilis (strain ATCC 29413 / PCC 7937) (Anabaena variabilis).